The following is a 335-amino-acid chain: Succinylglutamate desuccinylase (335 aa).

His-59, Glu-62, and His-151 together coordinate Zn(2+). The active site involves Glu-215.

It belongs to the AspA/AstE family. Succinylglutamate desuccinylase subfamily. The cofactor is Zn(2+).

It carries out the reaction N-succinyl-L-glutamate + H2O = L-glutamate + succinate. Its pathway is amino-acid degradation; L-arginine degradation via AST pathway; L-glutamate and succinate from L-arginine: step 5/5. Functionally, transforms N(2)-succinylglutamate into succinate and glutamate. The protein is Succinylglutamate desuccinylase of Pseudomonas putida (strain ATCC 47054 / DSM 6125 / CFBP 8728 / NCIMB 11950 / KT2440).